The primary structure comprises 255 residues: Glutamate racemase (255 aa).

Substrate-binding positions include 7–8 (DS) and 39–40 (YG). Catalysis depends on C70, which acts as the Proton donor/acceptor. Residue 71 to 72 (NT) coordinates substrate. The active-site Proton donor/acceptor is the C181. 182–183 (TH) is a substrate binding site.

This sequence belongs to the aspartate/glutamate racemases family.

The enzyme catalyses L-glutamate = D-glutamate. It functions in the pathway cell wall biogenesis; peptidoglycan biosynthesis. Provides the (R)-glutamate required for cell wall biosynthesis. The polypeptide is Glutamate racemase (Helicobacter pylori (strain HPAG1)).